The following is a 160-amino-acid chain: Ribosomal RNA large subunit methyltransferase H (160 aa).

S-adenosyl-L-methionine contacts are provided by residues Leu-77, Gly-109, and 128 to 133 (LSNLTF).

Belongs to the RNA methyltransferase RlmH family. As to quaternary structure, homodimer.

Its subcellular location is the cytoplasm. The catalysed reaction is pseudouridine(1915) in 23S rRNA + S-adenosyl-L-methionine = N(3)-methylpseudouridine(1915) in 23S rRNA + S-adenosyl-L-homocysteine + H(+). Functionally, specifically methylates the pseudouridine at position 1915 (m3Psi1915) in 23S rRNA. The protein is Ribosomal RNA large subunit methyltransferase H of Desulforamulus reducens (strain ATCC BAA-1160 / DSM 100696 / MI-1) (Desulfotomaculum reducens).